A 708-amino-acid polypeptide reads, in one-letter code: FACT complex subunit SSRP1 (708 aa).

Alanine 2 is subject to N-acetylalanine. A Glycyl lysine isopeptide (Lys-Gly) (interchain with G-Cter in SUMO2) cross-link involves residue lysine 90. Residue threonine 170 is modified to Phosphothreonine. Lysine 233 carries the N6-acetyllysine modification. Residues lysine 296 and lysine 364 each participate in a glycyl lysine isopeptide (Lys-Gly) (interchain with G-Cter in SUMO2) cross-link. N6-acetyllysine is present on lysine 413. Tyrosine 441 carries the phosphotyrosine modification. Serine 444 is modified (phosphoserine). Tyrosine 452 carries the post-translational modification Phosphotyrosine. The disordered stretch occupies residues 458–708; that stretch reads EEGKIREENA…SEDSASGSDE (251 aa). Residues 470–496 show a composition bias toward acidic residues; the sequence is SSDDSGEETDESFNPGEEEEDVAEEFD. Phosphoserine is present on serine 471. Residues 497–507 show a composition bias toward low complexity; the sequence is SNASASSSSNE. Phosphoserine; by CK2 is present on serine 510. 2 stretches are compositionally biased toward basic and acidic residues: residues 512-546 and 577-624; these read REEK…DPNA and LSKK…SSKR. Lysine 542 is modified (N6-acetyllysine). Residues 547-615 constitute a DNA-binding region (HMG box); sequence PKRPMSAYML…EYEKAMKEYE (69 aa). The segment covering 625 to 634 has biased composition (basic residues); it reads DKSKKKKKVK. Residues 643 to 659 show a composition bias toward low complexity; the sequence is PSRGSSSKSSSRQLSDS. Position 657 is a phosphoserine; by CK2 (serine 657). Phosphoserine occurs at positions 659, 667, 668, 671, 672, and 673. Position 688 is a phosphoserine; by CK2 (serine 688). Positions 695 to 708 are enriched in polar residues; that stretch reads TPPSSEDSASGSDE.

The protein belongs to the SSRP1 family. Interacts with MYOG (via C-terminal region). Component of the FACT complex, a stable heterodimer of SSRP1 and SUPT16H. Also a component of a CK2-SPT16-SSRP1 complex which forms following UV irradiation, composed of SSRP1, SUPT16H, CSNK2A1, CSNK2A2 and CSNK2B. Binds to histone H3-H4 tetramers, but not to intact nucleosomes. Identified in a centromere complex containing histones H2A, H2B and H4, and at least CENPA, CENPB, CENPC, CENPT, CENPN, HJURP, SUPT16H, SSRP1 and RSF1. Interacts with isoform gamma of TP63. Interacts with FYTTD1/UIF. Interacts with SRF. Interacts with NEK9. In terms of processing, phosphorylated by CK2 following UV but not gamma irradiation. Phosphorylation inhibits its DNA-binding activity. Ubiquitinated. Polyubiquitinated following caspase cleavage resulting in degradation of the N-terminal ubiquitinated part of the cleaved protein. Post-translationally, sumoylated.

The protein resides in the nucleus. It localises to the chromosome. It is found in the nucleolus. In terms of biological role, component of the FACT complex, a general chromatin factor that acts to reorganize nucleosomes. The FACT complex is involved in multiple processes that require DNA as a template such as mRNA elongation, DNA replication and DNA repair. During transcription elongation the FACT complex acts as a histone chaperone that both destabilizes and restores nucleosomal structure. It facilitates the passage of RNA polymerase II and transcription by promoting the dissociation of one histone H2A-H2B dimer from the nucleosome, then subsequently promotes the reestablishment of the nucleosome following the passage of RNA polymerase II. The FACT complex is probably also involved in phosphorylation of 'Ser-392' of p53/TP53 via its association with CK2 (casein kinase II). Binds specifically to double-stranded DNA. Also acts as a transcriptional coactivator for p63/TP63. This is FACT complex subunit SSRP1 (Ssrp1) from Mus musculus (Mouse).